We begin with the raw amino-acid sequence, 259 residues long: Glutamate 5-kinase (259 aa).

Lys-18 contacts ATP. The substrate site is built by Ser-54, Asp-141, and Asn-153. Residue 173 to 174 (SD) participates in ATP binding.

The protein belongs to the glutamate 5-kinase family.

The protein resides in the cytoplasm. It catalyses the reaction L-glutamate + ATP = L-glutamyl 5-phosphate + ADP. It functions in the pathway amino-acid biosynthesis; L-proline biosynthesis; L-glutamate 5-semialdehyde from L-glutamate: step 1/2. Functionally, catalyzes the transfer of a phosphate group to glutamate to form L-glutamate 5-phosphate. This is Glutamate 5-kinase from Clavibacter sepedonicus (Clavibacter michiganensis subsp. sepedonicus).